Consider the following 405-residue polypeptide: Na(+)-translocating NADH-quinone reductase subunit F (405 aa).

The helical transmembrane segment at 3–23 (IILGIVMFTVIVLALALMILF) threads the bilayer. The region spanning 32–124 (GDITIKVNDE…DMDIEVPEEV (93 aa)) is the 2Fe-2S ferredoxin-type domain. Positions 67, 73, 76, and 108 each coordinate [2Fe-2S] cluster. The FAD-binding FR-type domain occupies 127–267 (VKKWECTVIS…SGPFGEFFAK (141 aa)).

Belongs to the NqrF family. Composed of six subunits; NqrA, NqrB, NqrC, NqrD, NqrE and NqrF. [2Fe-2S] cluster serves as cofactor. The cofactor is FAD.

The protein localises to the cell inner membrane. The enzyme catalyses a ubiquinone + n Na(+)(in) + NADH + H(+) = a ubiquinol + n Na(+)(out) + NAD(+). NQR complex catalyzes the reduction of ubiquinone-1 to ubiquinol by two successive reactions, coupled with the transport of Na(+) ions from the cytoplasm to the periplasm. The first step is catalyzed by NqrF, which accepts electrons from NADH and reduces ubiquinone-1 to ubisemiquinone by a one-electron transfer pathway. The protein is Na(+)-translocating NADH-quinone reductase subunit F of Neisseria gonorrhoeae (strain ATCC 700825 / FA 1090).